Reading from the N-terminus, the 307-residue chain is Protoheme IX farnesyltransferase (307 aa).

Helical transmembrane passes span 31–51 (VMSL…YSVH), 52–72 (PFIA…AGAI), 102–119 (ALSF…FMAL), 123–145 (LLAS…IWLK), 151–171 (NIVI…AAVS), 179–199 (VILF…LALF), 225–245 (ILIY…IGMS), 247–267 (FIYL…AGSL), and 281–301 (FVYS…TNTI).

Belongs to the UbiA prenyltransferase family. Protoheme IX farnesyltransferase subfamily.

It localises to the cell inner membrane. It carries out the reaction heme b + (2E,6E)-farnesyl diphosphate + H2O = Fe(II)-heme o + diphosphate. It functions in the pathway porphyrin-containing compound metabolism; heme O biosynthesis; heme O from protoheme: step 1/1. Converts heme B (protoheme IX) to heme O by substitution of the vinyl group on carbon 2 of heme B porphyrin ring with a hydroxyethyl farnesyl side group. The polypeptide is Protoheme IX farnesyltransferase (Rickettsia canadensis (strain McKiel)).